The primary structure comprises 239 residues: Ubiquinone biosynthesis O-methyltransferase (239 aa).

The S-adenosyl-L-methionine site is built by Arg-45, Gly-64, Asp-85, and Met-129.

It belongs to the methyltransferase superfamily. UbiG/COQ3 family.

The enzyme catalyses a 3-demethylubiquinol + S-adenosyl-L-methionine = a ubiquinol + S-adenosyl-L-homocysteine + H(+). The catalysed reaction is a 3-(all-trans-polyprenyl)benzene-1,2-diol + S-adenosyl-L-methionine = a 2-methoxy-6-(all-trans-polyprenyl)phenol + S-adenosyl-L-homocysteine + H(+). Its pathway is cofactor biosynthesis; ubiquinone biosynthesis. In terms of biological role, O-methyltransferase that catalyzes the 2 O-methylation steps in the ubiquinone biosynthetic pathway. This Nitrosospira multiformis (strain ATCC 25196 / NCIMB 11849 / C 71) protein is Ubiquinone biosynthesis O-methyltransferase.